The chain runs to 613 residues: Ribosome-associated molecular chaperone SSB1 (613 aa).

Residues M1–D391 are nucleotide binding domain (NBD). ATP is bound by residues T16–Y18, K73, G205–T207, E271–S278, and G342. The interval T392–P402 is inter-domain linker. The tract at residues L403–R613 is substrate binding domain (SBD). The interval S516 to T612 is lid domain (SBDalpha). A Nuclear export signal motif is present at residues V574 to F582.

It belongs to the heat shock protein 70 family. Ssb-type Hsp70 subfamily. In terms of assembly, binds to ribosomes. Binds close to the ribosomal tunnel exit via contacts with both ribosomal proteins and rRNA. Directly interacts with nascent polypeptides. This interaction is dependent on the ribosome-associated complex (RAC). Interacts with SSE1. Interacts with FES1.

It localises to the cytoplasm. The enzyme catalyses ATP + H2O = ADP + phosphate + H(+). Ribosome-bound, Hsp70-type chaperone that assists in the cotranslational folding of newly synthesized proteins in the cytosol. Stimulates folding by interacting with nascent chains, binding to short, largely hydrophobic sequences exposed by unfolded proteins, thereby stabilizing longer, more slowly translated, and aggregation-prone nascent polypeptides and domains that cannot fold stably until fully synthesized. The Hsp70-protein substrate interaction depends on ATP-binding and on allosteric regulation between the NBD and the SBD. The ATP-bound state is characterized by a fast exchange rate of substrate (low affinity state), while in the ADP-bound state exchange is much slower (high affinity state). During the Hsp70 cycle, the chaperone switches between the ATP-bound state (open conformation) and the ADP-bound state (closed conformation) by major conformational rearrangements involving mainly the lid domain. Ssb cooperates with a specific Hsp40/Hsp70 co-chaperone termed the ribosome-associated complex (RAC), which stimulates the ATPase activity of the ribosome-associated pool of Ssbs and switches it to the high affinity substrate binding state. Hsp110 chaperone SSE1 and FES1 act as nucleotide exchange factors that cause substrate release. The sequence is that of Ribosome-associated molecular chaperone SSB1 (SSB1) from Eremothecium gossypii (strain ATCC 10895 / CBS 109.51 / FGSC 9923 / NRRL Y-1056) (Yeast).